The chain runs to 1935 residues: Myosin-7 (1935 aa).

In terms of domain architecture, Myosin N-terminal SH3-like spans 32–81 (DLKKDVFVPDDKEEFVKATILSREGGKVTAETEHGKTVTVKEDQVLQQNP). Residues 85-778 (DKIEDMAMLT…LLGLLEEMRD (694 aa)) form the Myosin motor domain. K129 is subject to N6,N6,N6-trimethyllysine. 178–185 (GESGAGKT) is an ATP binding site. T378 carries the phosphothreonine modification. 2 actin-binding regions span residues 655–677 (LNKL…IPNE) and 757–771 (KFGH…GLLG). One can recognise an IQ domain in the interval 781-810 (LSRIITRIQAQSRGVLSRMEFKKLLERRDS). Positions 839–1935 (LLKSAETEKE…DIGTKGLNEE (1097 aa)) form a coiled coil. 2 positions are modified to phosphoserine: S1137 and S1269. A Phosphothreonine modification is found at T1282. Y1308 bears the Phosphotyrosine mark. Phosphothreonine is present on T1309. S1510 is modified (phosphoserine). The residue at position 1513 (T1513) is a Phosphothreonine. The interval 1907 to 1935 (EERADIAESQVNKLRAKSRDIGTKGLNEE) is disordered. The segment covering 1923–1935 (KSRDIGTKGLNEE) has biased composition (basic and acidic residues).

The protein belongs to the TRAFAC class myosin-kinesin ATPase superfamily. Myosin family. As to quaternary structure, muscle myosin is a hexameric protein that consists of 2 heavy chain subunits (MHC), 2 alkali light chain subunits (MLC) and 2 regulatory light chain subunits (MLC-2). Interacts with ECPAS. Interacts (via C-terminus) with LRRC39.

It is found in the cytoplasm. It localises to the myofibril. The protein localises to the sarcomere. Its function is as follows. Myosins are actin-based motor molecules with ATPase activity essential for muscle contraction. Forms regular bipolar thick filaments that, together with actin thin filaments, constitute the fundamental contractile unit of skeletal and cardiac muscle. The protein is Myosin-7 (MYH7) of Bos taurus (Bovine).